A 74-amino-acid polypeptide reads, in one-letter code: NADH dehydrogenase [ubiquinone] 1 alpha subcomplex assembly factor 8 (74 aa).

The region spanning 22–69 (LAACGAEAAAYGRCVQASTAPGGRLSKDFCAREFEALRSCFAAAAKKT) is the CHCH domain. 2 short sequence motifs (cx9C motif) span residues 25 to 35 (CGAEAAAYGRC) and 51 to 61 (CAREFEALRSC). 2 cysteine pairs are disulfide-bonded: cysteine 25-cysteine 61 and cysteine 35-cysteine 51.

As to quaternary structure, interacts with NDUFAF5.

The protein localises to the mitochondrion. Involved in the assembly of mitochondrial NADH:ubiquinone oxidoreductase complex (complex I, MT-ND1). Required to stabilize NDUFAF5. In Homo sapiens (Human), this protein is NADH dehydrogenase [ubiquinone] 1 alpha subcomplex assembly factor 8.